The following is a 123-amino-acid chain: Small ribosomal subunit protein uS13 (123 aa).

Residues 99-123 are disordered; it reads RGQRTRTNARTRKGPRRTVGVKRKK.

The protein belongs to the universal ribosomal protein uS13 family. In terms of assembly, part of the 30S ribosomal subunit. Forms a loose heterodimer with protein S19. Forms two bridges to the 50S subunit in the 70S ribosome.

Its function is as follows. Located at the top of the head of the 30S subunit, it contacts several helices of the 16S rRNA. In the 70S ribosome it contacts the 23S rRNA (bridge B1a) and protein L5 of the 50S subunit (bridge B1b), connecting the 2 subunits; these bridges are implicated in subunit movement. Contacts the tRNAs in the A and P-sites. This Carboxydothermus hydrogenoformans (strain ATCC BAA-161 / DSM 6008 / Z-2901) protein is Small ribosomal subunit protein uS13.